Here is a 1669-residue protein sequence, read N- to C-terminus: Polycomb group protein Asx (1669 aa).

Positions 90 to 109 (IPPEKKPMAPSEEAAVSTAP) are disordered. The 124-residue stretch at 215–338 (PDSILASTNL…FEPFWGEKNS (124 aa)) folds into the DEUBAD domain. Short sequence motifs (LXXLL motif) lie at residues 224–228 (LRALL) and 244–248 (LIQLL). Positions 283–285 (NEF) match the NEF motif motif. The span at 336–352 (KNSRGKDKDKLESDCKN) shows a compositional bias: basic and acidic residues. Disordered stretches follow at residues 336–378 (KNSR…QQAT), 410–478 (SSTF…IVPN), 635–718 (FFTS…SAGA), 952–972 (MPHQ…QQQR), 1174–1193 (QQQS…QQQL), 1398–1437 (PGPG…PEQL), 1482–1505 (LHSI…TAGS), and 1587–1610 (SPTA…QHQH). Composition is skewed to polar residues over residues 367–378 (ATSQQKPLQQAT), 413–425 (FPPT…VLNE), and 434–450 (PSSS…TIAT). The span at 465-474 (KDSKQPKMDE) shows a compositional bias: basic and acidic residues. Low complexity predominate over residues 635 to 650 (FFTSSSSSNTATTAAN). Over residues 651–661 (KLEEHSDKPED) the composition is skewed to basic and acidic residues. A compositionally biased stretch (low complexity) spans 666 to 718 (IASSISGSTPASSITSTSCTSSSSSSASMSSSCSSSNSGSTTTAPTTSSSAGA). Composition is skewed to low complexity over residues 1174 to 1192 (QQQS…QQQQ) and 1404 to 1436 (TATA…APEQ). A compositionally biased stretch (low complexity) spans 1592–1610 (PSPINQQPQSQPTGTQHQH). The PHD-type; atypical zinc finger occupies 1602–1666 (QPTGTQHQHP…IGAAKLCVAC (65 aa)).

It belongs to the Asx family. In terms of assembly, component of the polycomb repressive deubiquitinase (PR-DUB) complex, at least composed of caly/calypso, Asx and sba (MBD5/6 homolog). Interacts (via DEUBAD domain) with caly/calypso (via ULD domain); the interaction produces a stable heterodimer with a composite binding site for ubiquitin. Two copies of the caly-Asx heterodimer assemble into a bidentate tetramer. Interacts (via PHD domain) with sba (probably via MBD domain); the interaction is important for the stability of the PR-DUB complex. Interacts with tant. Interacts with cyclin CycG. Highly expressed in nurse cells and deposited in oocytes late in oogenesis. Ubiquitous in early embryos. Late embryos show higher levels in CNS and neurectoderm.

The protein localises to the nucleus. It is found in the chromosome. Its function is as follows. Non-catalytic component of the polycomb repressive deubiquitinase (PR-DUB) complex, a complex that specifically mediates deubiquitination of histone H2A monoubiquitinated at 'Lys-119' (H2AK118ub1). Activator of the PR-DUB complex involved in ubiquitin binding and allosteric activation of calypso deubiquitinase activity. PR-DUB does not deubiquitinate monoubiquitinated histone H2B. PR-DUB is required to maintain the transcriptionally repressive state of homeotic genes throughout development. The PR-DUB complex has weak or no activity toward 'Lys-48'- and 'Lys-63'-linked polyubiquitin chains. Atypical Polycomb group protein, which may be involved in both Polycomb group (PcG) and trithorax group (trxG) complexes. PcG and trxG proteins act by forming multiprotein complexes, which are respectively required to maintain the transcriptionally repressive and transcriptionally active state of homeotic genes throughout development. PcG and trxG protein complexes are not required to initiate repression and activation, but to maintain it during later stages of development. This chain is Polycomb group protein Asx, found in Drosophila melanogaster (Fruit fly).